A 746-amino-acid polypeptide reads, in one-letter code: Exostosin-1 (746 aa).

Topologically, residues Met-1–Lys-5 are cytoplasmic. Residues Arg-6–Val-26 form a helical; Signal-anchor for type II membrane protein membrane-spanning segment. The Lumenal portion of the chain corresponds to Gln-27–Leu-746. Asn-89 carries an N-linked (GlcNAc...) asparagine glycan. 2 disulfides stabilise this stretch: Cys-98-Cys-103 and Cys-109-Cys-152. Leu-166 and Tyr-203 together coordinate a protein. 4 residues coordinate UDP: Lys-267, Lys-269, Tyr-271, and Arg-280. A disulfide bond links Cys-298 and Cys-312. His-300 serves as a coordination point for a protein. Tyr-319 and Tyr-324 together coordinate UDP. A glycan (N-linked (GlcNAc...) asparagine) is linked at Asn-330. 2 disulfide bridges follow: Cys-334–Cys-355 and Cys-652–Cys-704. Arg-346 and Glu-349 together coordinate UDP.

The protein belongs to the glycosyltransferase 47 family. As to quaternary structure, part of the heparan sulfate polymerase, a dimeric complex composed of EXT1 and EXT2. Could also form homooligomeric complexes. Interacts with NDST1. In terms of processing, N-glycosylated.

The protein localises to the golgi apparatus membrane. Its subcellular location is the golgi apparatus. The protein resides in the cis-Golgi network membrane. It is found in the endoplasmic reticulum membrane. It catalyses the reaction 3-O-{alpha-D-GlcNAc-[(1-&gt;4)-beta-D-GlcA-(1-&gt;4)-alpha-D-GlcNAc](n)-(1-&gt;4)-beta-D-GlcA-(1-&gt;3)-beta-D-Gal-(1-&gt;3)-beta-D-Gal-(1-&gt;4)-beta-D-Xyl}-L-seryl-[protein] + UDP-alpha-D-glucuronate = 3-O-{[(1-&gt;4)-beta-D-GlcA-(1-&gt;4)-alpha-D-GlcNAc](n+1)-(1-&gt;4)-beta-D-GlcA-(1-&gt;3)-beta-D-Gal-(1-&gt;3)-beta-D-Gal-(1-&gt;4)-beta-D-Xyl}-L-seryl-[protein] + UDP + H(+). It participates in protein modification; protein glycosylation. Glycosyltransferase forming with EXT2 the heterodimeric heparan sulfate polymerase which catalyzes the elongation of the heparan sulfate glycan backbone. Glycan backbone extension consists in the alternating transfer of (1-&gt;4)-beta-D-GlcA and (1-&gt;4)-alpha-D-GlcNAc residues from their respective UDP-sugar donors. Both EXT1 and EXT2 are required for the full activity of the polymerase since EXT1 bears the N-acetylglucosaminyl-proteoglycan 4-beta-glucuronosyltransferase activity within the complex while EXT2 carries the glucuronosyl-N-acetylglucosaminyl-proteoglycan 4-alpha-N-acetylglucosaminyltransferase activity. Heparan sulfate proteoglycans are ubiquitous components of the extracellular matrix and play an important role in tissue homeostasis and signaling. The polypeptide is Exostosin-1 (Cricetulus griseus (Chinese hamster)).